A 132-amino-acid polypeptide reads, in one-letter code: Large-conductance mechanosensitive channel (132 aa).

Transmembrane regions (helical) follow at residues 14-34 and 67-87; these read VIDL…VSSL and GNFI…FMFV.

It belongs to the MscL family. In terms of assembly, homopentamer.

The protein resides in the cell membrane. Its function is as follows. Channel that opens in response to stretch forces in the membrane lipid bilayer. May participate in the regulation of osmotic pressure changes within the cell. In Bacillus cereus (strain AH820), this protein is Large-conductance mechanosensitive channel.